We begin with the raw amino-acid sequence, 308 residues long: rRNA 2'-O-methyltransferase fibrillarin 1 (308 aa).

The interval 1-68 is disordered; that stretch reads MRPPVTGGRG…PRGGMKGGSK (68 aa). A compositionally biased stretch (gly residues) spans 22–35; the sequence is GRGFGGGRSFGGGR. Over residues 42–52 the composition is skewed to basic residues; that stretch reads SGPRGRGRGAP. The span at 53-65 shows a compositional bias: gly residues; the sequence is RGRGGPPRGGMKG. S-adenosyl-L-methionine contacts are provided by residues 156–157, 175–176, 200–201, and 220–223; these read TT, EF, DA, and DVAQ.

This sequence belongs to the methyltransferase superfamily. Fibrillarin family. Component of box C/D small nucleolar ribonucleoprotein (snoRNP) particles. Interacts with SKP1A. As to expression, expressed in roots, leaves and flowers. Expressed in stems.

Its subcellular location is the nucleus. It is found in the nucleolus. The catalysed reaction is a ribonucleotide in rRNA + S-adenosyl-L-methionine = a 2'-O-methylribonucleotide in rRNA + S-adenosyl-L-homocysteine + H(+). It catalyses the reaction L-glutaminyl-[histone H2A] + S-adenosyl-L-methionine = N(5)-methyl-L-glutaminyl-[histone H2A] + S-adenosyl-L-homocysteine + H(+). Functionally, S-adenosyl-L-methionine-dependent methyltransferase that has the ability to methylate both RNAs and proteins. Involved in pre-rRNA processing. Utilizes the methyl donor S-adenosyl-L-methionine to catalyze the site-specific 2'-hydroxyl methylation of ribose moieties in pre-ribosomal RNA. Site specificity is provided by a guide RNA that base pairs with the substrate. Methylation occurs at a characteristic distance from the sequence involved in base pairing with the guide RNA. Also acts as a protein methyltransferase by mediating methylation of 'Gln-105' of histone H2A (H2AQ105me), a modification that impairs binding of the FACT complex and is specifically present at 35S ribosomal DNA locus. Binds monophosphate phosphoinositides in vitro. In Arabidopsis thaliana (Mouse-ear cress), this protein is rRNA 2'-O-methyltransferase fibrillarin 1.